A 427-amino-acid chain; its full sequence is Glucose-1-phosphate adenylyltransferase (427 aa).

Residues Y121, G186, 201-202 (EK), and S219 each bind alpha-D-glucose 1-phosphate.

Belongs to the bacterial/plant glucose-1-phosphate adenylyltransferase family. In terms of assembly, homotetramer.

The catalysed reaction is alpha-D-glucose 1-phosphate + ATP + H(+) = ADP-alpha-D-glucose + diphosphate. It participates in glycan biosynthesis; glycogen biosynthesis. In terms of biological role, involved in the biosynthesis of ADP-glucose, a building block required for the elongation reactions to produce glycogen. Catalyzes the reaction between ATP and alpha-D-glucose 1-phosphate (G1P) to produce pyrophosphate and ADP-Glc. The protein is Glucose-1-phosphate adenylyltransferase of Corynebacterium diphtheriae (strain ATCC 700971 / NCTC 13129 / Biotype gravis).